A 1119-amino-acid chain; its full sequence is DNA-directed RNA polymerase subunit beta (1119 aa).

This sequence belongs to the RNA polymerase beta chain family. In terms of assembly, the RNAP catalytic core consists of 2 alpha, 1 beta, 1 beta' and 1 omega subunit. When a sigma factor is associated with the core the holoenzyme is formed, which can initiate transcription.

It catalyses the reaction RNA(n) + a ribonucleoside 5'-triphosphate = RNA(n+1) + diphosphate. Its function is as follows. DNA-dependent RNA polymerase catalyzes the transcription of DNA into RNA using the four ribonucleoside triphosphates as substrates. In Thermus thermophilus (strain ATCC 27634 / DSM 579 / HB8), this protein is DNA-directed RNA polymerase subunit beta.